Here is a 576-residue protein sequence, read N- to C-terminus: Enolase 4 (576 aa).

The interval 187–232 is disordered; it reads ELRNEAMSEAPPQATPTSAPAKDKKGNDKGKKGNITENPLPPAEPP. Residues 196-206 are compositionally biased toward low complexity; it reads APPQATPTSAP. Positions 207 to 217 are enriched in basic and acidic residues; that stretch reads AKDKKGNDKGK. Substrate-binding residues include Glu302 and Lys524.

Belongs to the enolase family.

It carries out the reaction (2R)-2-phosphoglycerate = phosphoenolpyruvate + H2O. It functions in the pathway carbohydrate degradation; glycolysis; pyruvate from D-glyceraldehyde 3-phosphate: step 4/5. This Danio rerio (Zebrafish) protein is Enolase 4 (eno4).